The primary structure comprises 228 residues: Ribose-5-phosphate isomerase A (228 aa).

Substrate contacts are provided by residues 29–32 (TGST), 85–88 (DGAD), and 98–101 (KGGG). The active-site Proton acceptor is E107. K125 serves as a coordination point for substrate.

This sequence belongs to the ribose 5-phosphate isomerase family. In terms of assembly, homodimer.

The catalysed reaction is aldehydo-D-ribose 5-phosphate = D-ribulose 5-phosphate. It functions in the pathway carbohydrate degradation; pentose phosphate pathway; D-ribose 5-phosphate from D-ribulose 5-phosphate (non-oxidative stage): step 1/1. In terms of biological role, catalyzes the reversible conversion of ribose-5-phosphate to ribulose 5-phosphate. The polypeptide is Ribose-5-phosphate isomerase A (Staphylococcus aureus (strain Mu50 / ATCC 700699)).